A 450-amino-acid polypeptide reads, in one-letter code: 23S rRNA (uracil(1939)-C(5))-methyltransferase RlmD (450 aa).

A TRAM domain is found at 12–70; the sequence is SKQLSAKLSLSVNQLDHLGAGIAQHQGKVVFIPGALPDETVTVQFTEQKKNYARAKLIK. [4Fe-4S] cluster-binding residues include C83, C89, C92, and C171. Residues Q283, F312, N317, E333, D360, and D380 each coordinate S-adenosyl-L-methionine. C406 acts as the Nucleophile in catalysis.

Belongs to the class I-like SAM-binding methyltransferase superfamily. RNA M5U methyltransferase family. RlmD subfamily.

The enzyme catalyses uridine(1939) in 23S rRNA + S-adenosyl-L-methionine = 5-methyluridine(1939) in 23S rRNA + S-adenosyl-L-homocysteine + H(+). Its function is as follows. Catalyzes the formation of 5-methyl-uridine at position 1939 (m5U1939) in 23S rRNA. The chain is 23S rRNA (uracil(1939)-C(5))-methyltransferase RlmD from Shewanella baltica (strain OS155 / ATCC BAA-1091).